A 603-amino-acid chain; its full sequence is Adenine deaminase (603 aa).

Belongs to the metallo-dependent hydrolases superfamily. Adenine deaminase family. In terms of assembly, homodimer. Mn(2+) serves as cofactor.

It carries out the reaction adenine + H2O + H(+) = hypoxanthine + NH4(+). In Klebsiella pneumoniae (strain 342), this protein is Adenine deaminase.